The sequence spans 219 residues: Thiamine-phosphate synthase (219 aa).

4-amino-2-methyl-5-(diphosphooxymethyl)pyrimidine contacts are provided by residues 44–48 (QFREK) and N79. Mg(2+) contacts are provided by D80 and D99. Position 117 (S117) interacts with 4-amino-2-methyl-5-(diphosphooxymethyl)pyrimidine. 143-145 (TST) lines the 2-[(2R,5Z)-2-carboxy-4-methylthiazol-5(2H)-ylidene]ethyl phosphate pocket. K146 contacts 4-amino-2-methyl-5-(diphosphooxymethyl)pyrimidine. 2-[(2R,5Z)-2-carboxy-4-methylthiazol-5(2H)-ylidene]ethyl phosphate contacts are provided by residues G175 and 195 to 196 (IS).

The protein belongs to the thiamine-phosphate synthase family. The cofactor is Mg(2+).

The enzyme catalyses 2-[(2R,5Z)-2-carboxy-4-methylthiazol-5(2H)-ylidene]ethyl phosphate + 4-amino-2-methyl-5-(diphosphooxymethyl)pyrimidine + 2 H(+) = thiamine phosphate + CO2 + diphosphate. The catalysed reaction is 2-(2-carboxy-4-methylthiazol-5-yl)ethyl phosphate + 4-amino-2-methyl-5-(diphosphooxymethyl)pyrimidine + 2 H(+) = thiamine phosphate + CO2 + diphosphate. It carries out the reaction 4-methyl-5-(2-phosphooxyethyl)-thiazole + 4-amino-2-methyl-5-(diphosphooxymethyl)pyrimidine + H(+) = thiamine phosphate + diphosphate. Its pathway is cofactor biosynthesis; thiamine diphosphate biosynthesis; thiamine phosphate from 4-amino-2-methyl-5-diphosphomethylpyrimidine and 4-methyl-5-(2-phosphoethyl)-thiazole: step 1/1. In terms of biological role, condenses 4-methyl-5-(beta-hydroxyethyl)thiazole monophosphate (THZ-P) and 2-methyl-4-amino-5-hydroxymethyl pyrimidine pyrophosphate (HMP-PP) to form thiamine monophosphate (TMP). The protein is Thiamine-phosphate synthase of Bacillus anthracis (strain A0248).